The chain runs to 404 residues: Biflaviolin synthase CYP158A2 (404 aa).

Positions 288 and 293 each coordinate flaviolin. Cys-353 provides a ligand contact to heme.

It belongs to the cytochrome P450 family. Heme serves as cofactor.

It catalyses the reaction 2 flaviolin + 2 reduced [2Fe-2S]-[ferredoxin] + O2 + H(+) = 3,3'-biflaviolin + 2 oxidized [2Fe-2S]-[ferredoxin] + 2 H2O. The catalysed reaction is 2 flaviolin + 2 reduced [2Fe-2S]-[ferredoxin] + O2 + H(+) = 3,8'-biflaviolin + 2 oxidized [2Fe-2S]-[ferredoxin] + 2 H2O. The protein operates within pigment biosynthesis. In terms of biological role, catalyzes oxidative C-C coupling reaction to polymerize flaviolin and form highly conjugated pigments which protect the soil bacterium from deleterious effects of UV irradiation (three isomers of biflaviolin and one triflaviolin). In Streptomyces coelicolor (strain ATCC BAA-471 / A3(2) / M145), this protein is Biflaviolin synthase CYP158A2.